We begin with the raw amino-acid sequence, 92 residues long: Neurophysin 2 (92 aa).

Disulfide bonds link Cys7-Cys51, Cys10-Cys24, Cys18-Cys41, Cys25-Cys31, Cys58-Cys70, Cys64-Cys82, and Cys71-Cys76.

It belongs to the vasopressin/oxytocin family.

Its subcellular location is the secreted. Neurophysin 2 specifically binds the midbrain peptide hormone vasopressin. In Equus caballus (Horse), this protein is Neurophysin 2 (AVP).